We begin with the raw amino-acid sequence, 513 residues long: Homeobox and leucine zipper protein Homez (513 aa).

The segment at residues 31–90 (WTQAVQTSELDGNEHLLQAFSYFPYPSLADIALLCLRHGLQMEKVKTWFMAQRLRCGISW) is a DNA-binding region (homeobox 1). Glycyl lysine isopeptide (Lys-Gly) (interchain with G-Cter in SUMO2) cross-links involve residues K156, K174, and K176. Disordered stretches follow at residues 200 to 221 (LSKE…ASWN), 241 to 287 (SCKE…SFSP), 303 to 328 (RLRN…HQRK), 402 to 429 (PAIS…PPPD), and 480 to 513 (LDEE…IIRD). The span at 205 to 217 (AGGGPDQSCGGGT) shows a compositional bias: gly residues. The span at 248–260 (PSGTPPSSSASSP) shows a compositional bias: low complexity. Phosphoserine is present on S320. 2 consecutive DNA-binding regions (homeobox) follow at residues 324-384 (QHQR…KHGQ) and 418-477 (TPPL…AEVV). The Nuclear localization signal motif lies at 327–332 (RKTKRK). T418 is modified (phosphothreonine). A compositionally biased stretch (pro residues) spans 419-429 (PPLPAPPPPPD).

Homodimer or heterodimer (Potential). Interacts with HOXC8.

It is found in the nucleus. In terms of biological role, may function as a transcriptional regulator. In Rattus norvegicus (Rat), this protein is Homeobox and leucine zipper protein Homez (Homez).